We begin with the raw amino-acid sequence, 727 residues long: Translation initiation factor IF-2, mitochondrial (727 aa).

Residues 1–29 (MNQKLLKLENLLRFHTIYRQLHSLCQRRA) constitute a mitochondrion transit peptide. Positions 178–348 (PRSPVVTIMG…VALAEMLELK (171 aa)) constitute a tr-type G domain. A G1 region spans residues 187–194 (GHVDHGKT). 187 to 194 (GHVDHGKT) is a GTP binding site. The interval 212–216 (GITQH) is G2. GTP contacts are provided by residues 234-237 (DTPG) and 288-291 (NKCD). The tract at residues 234–237 (DTPG) is G3. The interval 288-291 (NKCD) is G4. Positions 324–326 (SAL) are G5. Residue Thr-688 is modified to Phosphothreonine.

Belongs to the TRAFAC class translation factor GTPase superfamily. Classic translation factor GTPase family. IF-2 subfamily. Monomer. As to expression, expressed in all tissues examined. Highest level in skeletal muscle.

The protein localises to the mitochondrion. In terms of biological role, one of the essential components for the initiation of protein synthesis. Protects formylmethionyl-tRNA from spontaneous hydrolysis and promotes its binding to the 30S ribosomal subunits. Also involved in the hydrolysis of GTP during the formation of the 70S ribosomal complex. This chain is Translation initiation factor IF-2, mitochondrial (MTIF2), found in Homo sapiens (Human).